The chain runs to 210 residues: dITP/XTP pyrophosphatase (210 aa).

13–18 (THNPGK) contributes to the substrate binding site. Residues Asp-45 and Asp-74 each contribute to the Mg(2+) site. Asp-74 acts as the Proton acceptor in catalysis. Residues Ser-75, 160–163 (FGYD), Lys-183, and 195–196 (HR) each bind substrate.

The protein belongs to the HAM1 NTPase family. Homodimer. Mg(2+) is required as a cofactor.

It carries out the reaction XTP + H2O = XMP + diphosphate + H(+). The enzyme catalyses dITP + H2O = dIMP + diphosphate + H(+). The catalysed reaction is ITP + H2O = IMP + diphosphate + H(+). In terms of biological role, pyrophosphatase that catalyzes the hydrolysis of nucleoside triphosphates to their monophosphate derivatives, with a high preference for the non-canonical purine nucleotides XTP (xanthosine triphosphate), dITP (deoxyinosine triphosphate) and ITP. Seems to function as a house-cleaning enzyme that removes non-canonical purine nucleotides from the nucleotide pool, thus preventing their incorporation into DNA/RNA and avoiding chromosomal lesions. This Rhodopseudomonas palustris (strain ATCC BAA-98 / CGA009) protein is dITP/XTP pyrophosphatase.